The following is a 307-amino-acid chain: tRNA dimethylallyltransferase (307 aa).

ATP is bound at residue 16–23 (GCTAVGKT). 18–23 (TAVGKT) contributes to the substrate binding site. An interaction with substrate tRNA region spans residues 41-44 (DSLL).

Belongs to the IPP transferase family. As to quaternary structure, monomer. The cofactor is Mg(2+).

It carries out the reaction adenosine(37) in tRNA + dimethylallyl diphosphate = N(6)-dimethylallyladenosine(37) in tRNA + diphosphate. In terms of biological role, catalyzes the transfer of a dimethylallyl group onto the adenine at position 37 in tRNAs that read codons beginning with uridine, leading to the formation of N6-(dimethylallyl)adenosine (i(6)A). In Opitutus terrae (strain DSM 11246 / JCM 15787 / PB90-1), this protein is tRNA dimethylallyltransferase.